The sequence spans 530 residues: Bifunctional purine biosynthesis protein PurH (530 aa).

In terms of domain architecture, MGS-like spans 2 to 150 (TDHPRRVTRA…KNHDDVAVVV (149 aa)).

Belongs to the PurH family.

The catalysed reaction is (6R)-10-formyltetrahydrofolate + 5-amino-1-(5-phospho-beta-D-ribosyl)imidazole-4-carboxamide = 5-formamido-1-(5-phospho-D-ribosyl)imidazole-4-carboxamide + (6S)-5,6,7,8-tetrahydrofolate. It carries out the reaction IMP + H2O = 5-formamido-1-(5-phospho-D-ribosyl)imidazole-4-carboxamide. The protein operates within purine metabolism; IMP biosynthesis via de novo pathway; 5-formamido-1-(5-phospho-D-ribosyl)imidazole-4-carboxamide from 5-amino-1-(5-phospho-D-ribosyl)imidazole-4-carboxamide (10-formyl THF route): step 1/1. It functions in the pathway purine metabolism; IMP biosynthesis via de novo pathway; IMP from 5-formamido-1-(5-phospho-D-ribosyl)imidazole-4-carboxamide: step 1/1. The chain is Bifunctional purine biosynthesis protein PurH from Bradyrhizobium diazoefficiens (strain JCM 10833 / BCRC 13528 / IAM 13628 / NBRC 14792 / USDA 110).